Consider the following 353-residue polypeptide: 41 kDa protein (353 aa).

Residues 132–197 (QSSHASALEQ…DNNSSDTIKD (66 aa)) are disordered. Positions 157–169 (LDNKGKSDSENCN) are enriched in basic and acidic residues.

This chain is 41 kDa protein, found in Lactobacillus helveticus (Lactobacillus suntoryeus).